Reading from the N-terminus, the 139-residue chain is Aspartate 1-decarboxylase (139 aa).

Catalysis depends on Ser25, which acts as the Schiff-base intermediate with substrate; via pyruvic acid. A Pyruvic acid (Ser) modification is found at Ser25. Thr57 is a binding site for substrate. Tyr58 (proton donor) is an active-site residue. 73–75 lines the substrate pocket; the sequence is GAA. The interval 117–139 is disordered; the sequence is TGSDPADAPAGSGLLRGDRPAGR.

It belongs to the PanD family. As to quaternary structure, heterooctamer of four alpha and four beta subunits. Requires pyruvate as cofactor. Post-translationally, is synthesized initially as an inactive proenzyme, which is activated by self-cleavage at a specific serine bond to produce a beta-subunit with a hydroxyl group at its C-terminus and an alpha-subunit with a pyruvoyl group at its N-terminus.

Its subcellular location is the cytoplasm. It carries out the reaction L-aspartate + H(+) = beta-alanine + CO2. It functions in the pathway cofactor biosynthesis; (R)-pantothenate biosynthesis; beta-alanine from L-aspartate: step 1/1. Its function is as follows. Catalyzes the pyruvoyl-dependent decarboxylation of aspartate to produce beta-alanine. This Nocardioides sp. (strain ATCC BAA-499 / JS614) protein is Aspartate 1-decarboxylase.